The primary structure comprises 260 residues: O-antigen export system permease protein RfbA (260 aa).

7 helical membrane passes run 31–51, 63–83, 109–129, 139–159, 173–193, 201–221, and 229–249; these read FLGF…YVLL, FPFF…SVGG, VVVT…VLGM, VVLF…LTYI, IVSN…PLST, SLML…AIFY, and EPLM…SSIF. An ABC transmembrane type-2 domain is found at 32–252; that stretch reads LGFLWTFLNP…WAASSIFESR (221 aa).

It belongs to the ABC-2 integral membrane protein family.

It is found in the cell inner membrane. Functionally, may form an ATP-driven O-antigen export apparatus, in association with RfbB. This Myxococcus xanthus protein is O-antigen export system permease protein RfbA (rfbA).